We begin with the raw amino-acid sequence, 382 residues long: Porphobilinogen deaminase, chloroplastic (382 aa).

Residues 1–62 constitute a chloroplast transit peptide; that stretch reads MDIASSSLSQ…KQSSSGFVKA (62 aa). Residues R80 and S82 each contribute to the dipyrromethane site. Residue S123 is modified to Phosphoserine. Dipyrromethane-binding positions include 156–157, 200–206, and 223–229; these read KD, TASLRRK, and RGNVQTR. The Proton donor/acceptor role is filled by D157. Residue C316 is modified to S-(dipyrrolylmethanemethyl)cysteine.

Belongs to the HMBS family. In terms of assembly, monomer. Dipyrromethane is required as a cofactor.

It localises to the plastid. It is found in the chloroplast. The enzyme catalyses 4 porphobilinogen + H2O = hydroxymethylbilane + 4 NH4(+). It participates in porphyrin-containing compound metabolism; protoporphyrin-IX biosynthesis; coproporphyrinogen-III from 5-aminolevulinate: step 2/4. It functions in the pathway porphyrin-containing compound metabolism; chlorophyll biosynthesis. With respect to regulation, inhibited by NH(3), heavy-metal ions, hydroxylamine and 2-bromoporphobilinogen. Not inhibited by N-ethylmaleimide. In terms of biological role, tetrapolymerization of the monopyrrole PBG into the hydroxymethylbilane pre-uroporphyrinogen in several discrete steps. This is Porphobilinogen deaminase, chloroplastic (HEMC) from Arabidopsis thaliana (Mouse-ear cress).